We begin with the raw amino-acid sequence, 248 residues long: Cobalt transport protein CbiM (248 aa).

The first 29 residues, Met1–Ala29, serve as a signal peptide directing secretion. 6 helical membrane passes run Gly40–Ile60, Thr72–Val92, Leu104–Phe124, Thr136–Phe156, Gly167–Val187, and Ile210–Tyr230.

It belongs to the CbiM family. As to quaternary structure, forms an energy-coupling factor (ECF) transporter complex composed of an ATP-binding protein (A component, CbiO), a transmembrane protein (T component, CbiQ) and 2 possible substrate-capture proteins (S components, CbiM and CbiN) of unknown stoichimetry.

Its subcellular location is the cell membrane. It functions in the pathway cofactor biosynthesis; adenosylcobalamin biosynthesis. Part of the energy-coupling factor (ECF) transporter complex CbiMNOQ involved in cobalt import. This Ruminiclostridium cellulolyticum (strain ATCC 35319 / DSM 5812 / JCM 6584 / H10) (Clostridium cellulolyticum) protein is Cobalt transport protein CbiM.